Reading from the N-terminus, the 174-residue chain is Interleukin-1 receptor antagonist protein (174 aa).

An N-terminal signal peptide occupies residues 1–23; that stretch reads MDIYIHGYLICLLLFLFRSETAC. A disulfide bridge links Cys-89 with Cys-139. N-linked (GlcNAc...) asparagine glycosylation is present at Asn-107.

The protein belongs to the IL-1 family.

It localises to the secreted. Anti-inflammatory antagonist of interleukin-1 family of proinflammatory cytokines such as interleukin-1beta/IL1B and interleukin-1alpha/IL1A. Protects from immune dysregulation and uncontrolled systemic inflammation triggered by IL1 for a range of innate stimulatory agents such as pathogens. This Bos taurus (Bovine) protein is Interleukin-1 receptor antagonist protein (IL1RN).